The chain runs to 150 residues: Transcriptional repressor NrdR (150 aa).

A zinc finger lies at 3–34; it reads CPFCGYEDTFVIDTREIEDQKVIRRRRECPNC. An ATP-cone domain is found at 49 to 139; that stretch reads IMVIKKDGRR…VYQEFSSLEE (91 aa).

The protein belongs to the NrdR family. It depends on Zn(2+) as a cofactor.

In terms of biological role, negatively regulates transcription of bacterial ribonucleotide reductase nrd genes and operons by binding to NrdR-boxes. This chain is Transcriptional repressor NrdR, found in Dictyoglomus turgidum (strain DSM 6724 / Z-1310).